A 2240-amino-acid polypeptide reads, in one-letter code: Cadherin-89D (2240 aa).

5 consecutive Cadherin domains span residues 70 to 179 (SEGV…APEF), 180 to 295 (LNVP…PPKF), 296 to 411 (TEGV…VPEF), 412 to 528 (EADY…TPKF), and 529 to 643 (EHGN…APYE). Asn114, Asn119, Asn191, Asn278, Asn334, Asn417, Asn585, Asn720, Asn752, Asn822, Asn833, Asn983, Asn989, Asn1006, Asn1255, Asn1318, Asn1486, Asn1529, and Asn1556 each carry an N-linked (GlcNAc...) asparagine glycan. The tract at residues 814–844 (MPSEPTSRNITMGSRFRSRNRSRSSKSKRRL) is disordered. Cadherin domains lie at 824 to 927 (TMGS…APKF), 928 to 1087 (NALT…APMF), 1171 to 1284 (TTKC…APTF), 1285 to 1389 (KKSW…RPEF), and 1411 to 1520 (MLPV…PPKS). Basic residues predominate over residues 829-844 (FRSRNRSRSSKSKRRL). Cadherin domains follow at residues 1534 to 1660 (QHAY…APKF) and 1661 to 1774 (RGNG…MPVE). The chain crosses the membrane as a helical span at residues 1884 to 1904 (FVTVVLLALISLGALIAACCY). The Cytoplasmic portion of the chain corresponds to 1905–2240 (VCMRQKRRLW…LEFSKSNSLF (336 aa)). 2 disordered regions span residues 1930–1972 (IAGI…PESV) and 2121–2140 (AHLELRQPNTDSSDTYEDSL). Residues 1939–1952 (QKQRRQRQQRHTQR) show a composition bias toward basic residues. Over residues 1953-1964 (CSKGSTGSQRPT) the composition is skewed to polar residues.

The protein localises to the cell membrane. In terms of biological role, cadherins are calcium-dependent cell adhesion proteins. They preferentially interact with themselves in a homophilic manner in connecting cells. This chain is Cadherin-89D (Cad89D), found in Drosophila melanogaster (Fruit fly).